The sequence spans 623 residues: Peptidoglycan D,D-transpeptidase MrdA (623 aa).

A helical transmembrane segment spans residues 17-37; it reads VIVAFGVVVVCFGILIFNLYN. Residue S326 is the Acyl-ester intermediate of the active site.

Belongs to the transpeptidase family. MrdA subfamily.

The protein localises to the cell inner membrane. It carries out the reaction Preferential cleavage: (Ac)2-L-Lys-D-Ala-|-D-Ala. Also transpeptidation of peptidyl-alanyl moieties that are N-acyl substituents of D-alanine.. Its pathway is cell wall biogenesis; peptidoglycan biosynthesis. Its function is as follows. Catalyzes cross-linking of the peptidoglycan cell wall. This Salmonella typhimurium (strain SL1344) protein is Peptidoglycan D,D-transpeptidase MrdA.